Here is a 1062-residue protein sequence, read N- to C-terminus: Zinc finger protein swm (1062 aa).

In terms of domain architecture, PWI spans 7 to 75; it reads DKLKDWLSVV…ERLFDAIASE (69 aa). Disordered regions lie at residues 119–145 and 171–340; these read ADSPPPPPKDNVIKPDSNQVKLEQASQ and KPAF…PDRV. Over residues 134–145 the composition is skewed to polar residues; the sequence is DSNQVKLEQASQ. Residues 172 to 182 show a composition bias toward basic and acidic residues; sequence PAFDHKTKDSH. The span at 197 to 207 shows a compositional bias: low complexity; sequence SASPPGRSSGV. A compositionally biased stretch (gly residues) spans 208–220; that stretch reads SGSGGGGPGGAGL. Positions 234–249 are enriched in basic residues; sequence SRRRRASLRSRSRSRS. Composition is skewed to basic and acidic residues over residues 264–273 and 294–310; these read RRVNEREKTQ and RNFDRRRIGGNADDRPR. The span at 322 to 340 shows a compositional bias: polar residues; the sequence is RSMSPERNARRNQNSPDRV. Residues 363–391 form a C3H1-type zinc finger; that stretch reads SHPRQRCRDFDEKGYCVRGETCPWDHGVN. The disordered stretch occupies residues 416–463; that stretch reads EIWARSGGPPPGAGQGPVPPPTQPGQTTINPFSGNVRPTTLMSGSGPS. Residues 423-438 are compositionally biased toward pro residues; it reads GPPPGAGQGPVPPPTQ. Polar residues predominate over residues 444-461; the sequence is INPFSGNVRPTTLMSGSG. An RRM domain is found at 561-635; that stretch reads SSLELRKVPR…RFIKVFWHND (75 aa). Disordered regions lie at residues 666 to 704, 716 to 741, 822 to 847, 886 to 920, and 1004 to 1062; these read NVPAVPTPNADGAKISNANPLTEAGAGNIGTPATEQANT, TTTAGGSAGGAAGAGAPGSGRPLNPA, QDQLQAQMQQQQQQQQPPVKKTKEQQ, SAANNKSTHYAPASGAPGGGAGRKRPNLPEGPTRV, and APVE…SWRR. The segment covering 721–733 has biased composition (gly residues); the sequence is GSAGGAAGAGAPG. Positions 823–840 are enriched in low complexity; that stretch reads DQLQAQMQQQQQQQQPPV. Residues 1018–1037 are compositionally biased toward polar residues; the sequence is SLENPKQLIQSVSESESLLG. Over residues 1046–1056 the composition is skewed to acidic residues; the sequence is LEDEEEDEESE.

The protein localises to the nucleus. In terms of biological role, negatively regulates Hedgehog (hh) protein signal in wing development. Regulates neural-specific glycosylation by binding to FucTA mRNA and facilitating its nuclear export in neural cells. This is Zinc finger protein swm from Drosophila melanogaster (Fruit fly).